A 91-amino-acid polypeptide reads, in one-letter code: Large ribosomal subunit protein uL23c (91 aa).

Belongs to the universal ribosomal protein uL23 family. Part of the 50S ribosomal subunit.

Its subcellular location is the plastid. The protein resides in the chloroplast. Functionally, binds to 23S rRNA. The chain is Large ribosomal subunit protein uL23c (rpl23) from Anthoceros angustus (Hornwort).